Reading from the N-terminus, the 377-residue chain is Succinyl-diaminopimelate desuccinylase (377 aa).

His-68 is a Zn(2+) binding site. Asp-70 is a catalytic residue. Zn(2+) is bound at residue Asp-101. Residue Glu-135 is the Proton acceptor of the active site. 3 residues coordinate Zn(2+): Glu-136, Glu-164, and His-350.

This sequence belongs to the peptidase M20A family. DapE subfamily. As to quaternary structure, homodimer. Zn(2+) serves as cofactor. Requires Co(2+) as cofactor.

It catalyses the reaction N-succinyl-(2S,6S)-2,6-diaminopimelate + H2O = (2S,6S)-2,6-diaminopimelate + succinate. The protein operates within amino-acid biosynthesis; L-lysine biosynthesis via DAP pathway; LL-2,6-diaminopimelate from (S)-tetrahydrodipicolinate (succinylase route): step 3/3. Functionally, catalyzes the hydrolysis of N-succinyl-L,L-diaminopimelic acid (SDAP), forming succinate and LL-2,6-diaminopimelate (DAP), an intermediate involved in the bacterial biosynthesis of lysine and meso-diaminopimelic acid, an essential component of bacterial cell walls. The chain is Succinyl-diaminopimelate desuccinylase from Acinetobacter baumannii (strain AB307-0294).